Consider the following 467-residue polypeptide: Cruzipain (467 aa).

A signal peptide spans 1 to 18 (MSGWARALLLAAVLVVMA). Residues 19–122 (CLVPAATASL…RVPVKVEVVG (104 aa)) constitute a propeptide, activation peptide. Intrachain disulfides connect Cys-144/Cys-185, Cys-178/Cys-223, and Cys-277/Cys-325. The active site involves Cys-147. The N-linked (GlcNAc...) asparagine glycan is linked to Asn-169. His-284 is an active-site residue. A glycan (N-linked (GlcNAc...) asparagine) is linked at Asn-292. Asn-304 is an active-site residue. A disordered region spans residues 333 to 355 (SAVVGGPGPTPEPTTTTTTSAPG). A compositionally biased stretch (low complexity) spans 345 to 354 (PTTTTTTSAP). Asn-377 carries N-linked (GlcNAc...) asparagine glycosylation.

The protein belongs to the peptidase C1 family.

The catalysed reaction is Broad endopeptidase specificity similar to that of cathepsin L.. Its activity is regulated as follows. Strongly inhibited by E-64 (L-trans-epoxysuccinylleucylamido(4-guanidino)butane), Leupeptin, and N-alpha-p-tosyl-L-lysine chloromethyl ketone. Its function is as follows. Hydrolyzes chromogenic peptides at the carboxyl Arg or Lys; requires at least one more amino acid, preferably Arg, Phe, Val or Leu, between the terminal Arg or Lys and the amino-blocking group. In terms of biological role, the cysteine protease may play an important role in the development and differentiation of the parasites at several stages of their life cycle. This Trypanosoma cruzi protein is Cruzipain.